Here is a 104-residue protein sequence, read N- to C-terminus: Large ribosomal subunit protein uL24 (104 aa).

Belongs to the universal ribosomal protein uL24 family. As to quaternary structure, part of the 50S ribosomal subunit.

Its function is as follows. One of two assembly initiator proteins, it binds directly to the 5'-end of the 23S rRNA, where it nucleates assembly of the 50S subunit. Functionally, one of the proteins that surrounds the polypeptide exit tunnel on the outside of the subunit. This chain is Large ribosomal subunit protein uL24, found in Shigella dysenteriae serotype 1 (strain Sd197).